The sequence spans 776 residues: DExH-box ATP-dependent RNA helicase DExH18, mitochondrial (776 aa).

The transit peptide at 1 to 84 (MARGVAGVLR…RSFSSTVDNN (84 aa)) directs the protein to the mitochondrion. The segment at 80–101 (TVDNNGENDDIEESVGSESDDY) is disordered. Positions 85–101 (GENDDIEESVGSESDDY) are enriched in acidic residues. Positions 268 to 426 (FARAMKRKIV…RFKPLVVEAK (159 aa)) constitute a Helicase ATP-binding domain. Residue 281–288 (GPTNSGKT) participates in ATP binding. The short motif at 361–364 (DEIQ) is the DEIH box; degenerate element. In terms of domain architecture, Helicase C-terminal spans 427 to 595 (TLLGELKNVK…LFAAQVPDMA (169 aa)).

It belongs to the DExH box helicase family. In terms of assembly, homodimer; in free form. Component of the mitochondrial degradosome (mtEXO) complex which is a heteropentamer containing 2 copies of SUPV3L1 and 3 copies of PNPT1. Requires Mg(2+) as cofactor. The cofactor is Mn(2+).

It localises to the nucleus. The protein resides in the mitochondrion matrix. Its subcellular location is the mitochondrion nucleoid. It catalyses the reaction ATP + H2O = ADP + phosphate + H(+). In terms of biological role, major helicase player in mitochondrial RNA metabolism. Component of the mitochondrial degradosome (mtEXO) complex, that degrades 3' overhang double-stranded RNA with a 3'-to-5' directionality in an ATP-dependent manner. ATPase and ATP-dependent multisubstrate helicase, able to unwind double-stranded (ds) DNA and RNA, and RNA/DNA heteroduplexes in the 5'-to-3' direction. Plays a role in the RNA surveillance system in mitochondria; regulates the stability of mature mRNAs, the removal of aberrantly formed mRNAs and the rapid degradation of non coding processing intermediates. In Arabidopsis thaliana (Mouse-ear cress), this protein is DExH-box ATP-dependent RNA helicase DExH18, mitochondrial.